The sequence spans 784 residues: Rabenosyn-5 (784 aa).

At A2 the chain carries N-acetylalanine. Phosphoserine is present on S3. The C2H2-type zinc finger occupies 14-37 (FLCPLCLKDLQSFYQLHSHYEEEH). The necessary for the correct targeting to endosomes stretch occupies residues 100–263 (RSHLSDFKKH…HCKDTLLKRE (164 aa)). The segment at 157 to 260 (DQDVPFCPDC…CCTHCKDTLL (104 aa)) adopts an FYVE-type zinc-finger fold. Residues C163, C166, C179, C182, C187, and C190 each contribute to the Zn(2+) site. Residues 207–224 (KESLSTHTSPSQSPNSVH) are compositionally biased toward polar residues. The segment at 207 to 241 (KESLSTHTSPSQSPNSVHGSRRGSISSMSSVSSVL) is disordered. Phosphoserine is present on residues S215, S219, S226, and S230. Over residues 228–240 (RGSISSMSSVSSV) the composition is skewed to low complexity. 2 residues coordinate Zn(2+): C252 and C255. The necessary for interaction with RAB4A stretch occupies residues 264–500 (QQIDEKEHTP…QLQDEYDQQQ (237 aa)). The interval 264–784 (QQIDEKEHTP…TLAKQKGGTD (521 aa)) is necessary for interaction with EHD1. Coiled-coil stretches lie at residues 378–414 (TKEQ…LEER) and 472–531 (QAKA…RELE). A compositionally biased stretch (basic and acidic residues) spans 390–400 (KEEMERKRAVE). A disordered region spans residues 390 to 429 (KEEMERKRAVERQAALESQRRLEERQSGLASRAANGEVAS). Residues 496–515 (YDQQQTEKAIELSRRQAEEE) form the UIM domain. Residues 574–732 (DLGSSPVPSS…DSDSGPEAEE (159 aa)) are disordered. Polar residues predominate over residues 579–598 (PVPSSTAPKTPSLSSTQPTR). The tract at residues 627–784 (PFDEEDLSSP…TLAKQKGGTD (158 aa)) is necessary for interaction with RAB5A. Over residues 663-673 (PFEEEDEEEEA) the composition is skewed to acidic residues. S684 carries the post-translational modification Phosphoserine. Acidic residues predominate over residues 722–732 (MDSDSGPEAEE).

In terms of assembly, interacts with EHD1, RAB4A, RAB5A, RAB14, RAB22A, RAB24 and VPS45. Binds simultaneously to RAB4A and RAB5A in vitro. Interacts with RAB4A and RAB5A that has been activated by GTP binding.

It localises to the cell membrane. Its subcellular location is the early endosome membrane. In terms of biological role, rab4/Rab5 effector protein acting in early endocytic membrane fusion and membrane trafficking of recycling endosomes. Required for endosome fusion either homotypically or with clathrin coated vesicles. Plays a role in the lysosomal trafficking of CTSD/cathepsin D from the Golgi to lysosomes. Also promotes the recycling of transferrin directly from early endosomes to the plasma membrane. Binds phospholipid vesicles containing phosphatidylinositol 3-phosphate (PtdInsP3). Plays a role in the recycling of transferrin receptor to the plasma membrane. The sequence is that of Rabenosyn-5 from Homo sapiens (Human).